A 175-amino-acid polypeptide reads, in one-letter code: Zinc finger A20 and AN1 domain-containing stress-associated protein 7 (175 aa).

An A20-type zinc finger spans residues 13–47 (PTEPKLCDNGCGFFGSPSNMNLCSKCYRSLRAEED). 12 residues coordinate Zn(2+): cysteine 19, cysteine 23, cysteine 35, cysteine 38, cysteine 116, cysteine 119, cysteine 130, cysteine 132, cysteine 137, histidine 140, histidine 146, and cysteine 148. The AN1-type zinc finger occupies 110–156 (VRPNNRCFSCNKKVGVMGFKCKCGSTFCGSHRYPEKHECSFDFKEVG).

Functionally, may be involved in environmental stress response. The chain is Zinc finger A20 and AN1 domain-containing stress-associated protein 7 (SAP7) from Arabidopsis thaliana (Mouse-ear cress).